Consider the following 404-residue polypeptide: MQSSDRDLSGPEASPSVMPEVLSECSPAPTKSTAFDLFNLVLSYKRLEIYLEPLKDAGDGVRYLLRWQMPLCSLLTCLGLNILFLTLNEGAWYSVGALIISVPALLGYLQEVCRAQLPESELMRRKYHSVRQEDLQRVRLSRPEAVAEVKSFLIRLEAFLARLCYTCESAYRVLHWENPVVSSQFYGALLGMVCMLYLLPLCWVLALLNSTLFLGNGEFFRVVSEYRACLQRRMSPKQEECVCEGSALQDAGGRAVVLDSTPAPTPTEDLTPGSVEEAEEAEPDEEFKDAIEEDDEGTPCPAEDELTMQDNGFLSKNEVLRSKVSKLTERLRKRYPTNNFGNCAGCAATFSVLKKRRSCSNCGNSFCSRCCSFKVPKSSMGATAPEAQRETVFVCASCNQTLSK.

Residues 1–25 are disordered; sequence MQSSDRDLSGPEASPSVMPEVLSEC. At 1 to 63 the chain is on the cytoplasmic side; that stretch reads MQSSDRDLSG…LKDAGDGVRY (63 aa). The interval 1–92 is sufficient for homooligomerization; it reads MQSSDRDLSG…LFLTLNEGAW (92 aa). The tract at residues 1–205 is sufficient for localization to endoplasmic reticulum tubular network and for interactions with REEP1, REEP5, ATL1, ATL2, ATL3 and SPAST; it reads MQSSDRDLSG…LYLLPLCWVL (205 aa). Residues 51–64 are necessary for interaction with RAB11A and function in neurite outgrowth; it reads LEPLKDAGDGVRYL. Residues 64–85 form a helical membrane-spanning segment; that stretch reads LLRWQMPLCSLLTCLGLNILFL. The Lumenal portion of the chain corresponds to 86–90; it reads TLNEG. The chain crosses the membrane as a helical span at residues 91–109; sequence AWYSVGALIISVPALLGYL. The Cytoplasmic segment spans residues 110-187; the sequence is QEVCRAQLPE…NPVVSSQFYG (78 aa). An intramembrane region (helical) is located at residues 188-208; that stretch reads ALLGMVCMLYLLPLCWVLALL. At 209–404 the chain is on the cytoplasmic side; that stretch reads NSTLFLGNGE…CASCNQTLSK (196 aa). The tract at residues 259–299 is disordered; that stretch reads DSTPAPTPTEDLTPGSVEEAEEAEPDEEFKDAIEEDDEGTP. The interval 271–354 is necessary for interaction with KIF5A; it reads TPGSVEEAEE…GCAATFSVLK (84 aa). The segment covering 276–299 has biased composition (acidic residues); the sequence is EEAEEAEPDEEFKDAIEEDDEGTP. The necessary for interaction with VAPA stretch occupies residues 286–292; it reads EFKDAIE. The FYVE-type zinc-finger motif lies at 337–403; that stretch reads TNNFGNCAGC…VCASCNQTLS (67 aa). Residues C343, C346, C359, C362, C367, C370, C395, and C398 each coordinate Zn(2+).

As to quaternary structure, can form homooligomers (monomers, dimers and tetramers). Interacts with FKBP8; may negatively regulate ZFYVE27 phosphorylation. Interacts with VAPA (via MSP domain); may regulate ZFYVE27 retention in the endoplasmic reticulum and its function in cell projections formation. Interacts with VAPB (via MSP domain). Interacts with RAB11A (GDP-bound form); regulates RAB11A. Interacts with RAB11B (GDP-bound form), REEP1, REEP5, ATL1, ATL2, ATL3, SPAST, SURF4, KIF5A, KIF5B, KIF5C and RTN3. In terms of processing, phosphorylated. Phosphorylation is induced by NGF through the MAPK/ERK pathway and modulates interaction with RAB11A.

The protein resides in the recycling endosome membrane. It localises to the endoplasmic reticulum membrane. The protein localises to the cell projection. It is found in the growth cone membrane. Functionally, key regulator of RAB11-dependent vesicular trafficking during neurite extension through polarized membrane transport. Promotes axonal elongation and contributes to the establishment of neuronal cell polarity. Involved in nerve growth factor-induced neurite formation in VAPA-dependent manner. Contributes to both the formation and stabilization of the tubular ER network. Involved in ER morphogenesis by regulating the sheet-to-tubule balance and possibly the density of tubule interconnections. Acts as an adapter protein that facilitates the interaction of KIF5A with VAPA, VAPB, SURF4, RAB11A, RAB11B and RTN3 and the ZFYVE27-KIF5A complex contributes to the transport of these proteins in neurons. Can induce formation of neurite-like membrane protrusions in non-neuronal cells in a KIF5A/B-dependent manner. The sequence is that of Protrudin (Zfyve27) from Rattus norvegicus (Rat).